The following is a 1045-amino-acid chain: Protein phosphatase Slingshot (1045 aa).

The span at 1-20 shows a compositional bias: polar residues; that stretch reads MALVTVQRSPSVAGSCSNSD. 4 disordered regions span residues 1–35, 58–80, 143–194, and 306–325; these read MALV…GNDR, TQSE…SNNS, KVGG…DNKN, and ESRR…EKEE. Residues 66–80 are compositionally biased toward low complexity; that stretch reads TDSTRSSNSTQSNNS. A compositionally biased stretch (polar residues) spans 149–174; that stretch reads GTKSSTSPAVPTQRQLSVEQTATEAS. A compositionally biased stretch (basic and acidic residues) spans 175–185; the sequence is SKCDKTADKEN. Residues 324–379 enclose the DEK-C domain; it reads EETESVIKMKLKAIMMSVDLDEVTSKYIRGRLEEILDMDLGEYKSFIDAEMLVILG. Residues 383–524 enclose the Tyrosine-protein phosphatase domain; that stretch reads APTKIFEHVY…LETYSGMLDA (142 aa). The active-site Phosphocysteine intermediate is cysteine 468. Residues 529-547 show a composition bias toward basic and acidic residues; that stretch reads EKLQRSKSETNLKSTKDAR. Disordered regions lie at residues 529 to 631, 699 to 799, and 1001 to 1045; these read EKLQ…PERS, SHLG…GDNR, and ACSA…SDSS. The span at 560-569 shows a compositional bias: polar residues; sequence ALNQAKSKST. A compositionally biased stretch (basic residues) spans 586-601; that stretch reads MHRRSIAQKSQRRMVR. Over residues 602–625 the composition is skewed to polar residues; sequence RSSSTSPKTQTAVVTKQQSQSMEN. The segment covering 704–713 has biased composition (low complexity); it reads SVSGSSSGNI. Serine 719 is modified (phosphoserine). Residues 721–732 are compositionally biased toward low complexity; sequence CSDVFSSQVDSV. Composition is skewed to polar residues over residues 764 to 774 and 1008 to 1021; these read TPQQQKQQSNA and KKTT…SSPV. Positions 1029-1045 are enriched in low complexity; the sequence is SAASNSNSSASNSSDSS.

This sequence belongs to the protein-tyrosine phosphatase family. In terms of assembly, interacts with actin.

The protein resides in the cytoplasm. The protein localises to the cytoskeleton. The enzyme catalyses O-phospho-L-tyrosyl-[protein] + H2O = L-tyrosyl-[protein] + phosphate. It carries out the reaction O-phospho-L-seryl-[protein] + H2O = L-seryl-[protein] + phosphate. It catalyses the reaction O-phospho-L-threonyl-[protein] + H2O = L-threonyl-[protein] + phosphate. In terms of biological role, protein phosphatase which regulates actin filament dynamics. Dephosphorylates and activates the actin binding/depolymerizing factor tsr/cofilin, which subsequently binds to actin filaments and stimulates their disassembly. Required for axon growth. The polypeptide is Protein phosphatase Slingshot (ssh) (Drosophila melanogaster (Fruit fly)).